The chain runs to 478 residues: Glutamate--tRNA ligase (478 aa).

The 'HIGH' region motif lies at proline 9–threonine 19. The 'KMSKS' region signature appears at lysine 248 to arginine 252. Position 251 (lysine 251) interacts with ATP.

It belongs to the class-I aminoacyl-tRNA synthetase family. Glutamate--tRNA ligase type 1 subfamily. In terms of assembly, monomer.

It localises to the cytoplasm. It carries out the reaction tRNA(Glu) + L-glutamate + ATP = L-glutamyl-tRNA(Glu) + AMP + diphosphate. Its function is as follows. Catalyzes the attachment of glutamate to tRNA(Glu) in a two-step reaction: glutamate is first activated by ATP to form Glu-AMP and then transferred to the acceptor end of tRNA(Glu). This chain is Glutamate--tRNA ligase, found in Prochlorococcus marinus (strain MIT 9515).